The sequence spans 392 residues: MADNLNLVSVLGVLLVLTIFHNPIIVYAGEGVPNVALFTFGDSYYDAGNKVFLSQRKDLPQTYWPYGKSRDYPNGKFSDGHIVPDFIADFISIPNGVLPPVLKPGVDISRGVSFAVADASILGAPVESMTLNQQVVKFKNMKSNWNDSYIEKSLFMIYIGTEDYLNFTKANPNADASAQQAFVTNVINRLKNDIKLLYSLGASKFVVQLLAPLGCLPIVRQEYKTGNECYELLNDLAKQHNGKIGPMLNEFAKISTSPYGFQFTVFDFYNAVLRRIATGRSLNYRFFVTNTSCCGVGTHNAYGCGKGNVHSKLCEYQRSYFFFDGRHNTEKAQEEMAHLLYGADPDVVQPMTVRELIVYPTGETMREYWEPNNLAIRRRPSRDFYLGLAAYY.

The N-terminal stretch at 1-28 is a signal peptide; the sequence is MADNLNLVSVLGVLLVLTIFHNPIIVYA. The active-site Nucleophile is Ser43. Residues Asn146, Asn166, and Asn290 are each glycosylated (N-linked (GlcNAc...) asparagine). Catalysis depends on residues Asp324 and His327.

The protein belongs to the 'GDSL' lipolytic enzyme family.

It localises to the secreted. In terms of biological role, represses or inhibits nitriles production from methionine-derived and from indol-3-ylmethyl glucosinolates. Favors isothiocyanate production. The protein is GDSL esterase/lipase ESM1 (ESM1) of Arabidopsis thaliana (Mouse-ear cress).